The primary structure comprises 326 residues: Flotillin-like protein FloA (326 aa).

The chain crosses the membrane as a helical span at residues 3–23; sequence FTTIVVILLVIACIVVLFFIG.

It belongs to the flotillin-like FloA family. As to quaternary structure, homooligomerizes.

Its subcellular location is the cell membrane. It is found in the membrane raft. Its function is as follows. Found in functional membrane microdomains (FMM) that may be equivalent to eukaryotic membrane rafts. FMMs are highly dynamic and increase in number as cells age. Flotillins are thought to be important factors in membrane fluidity. In Desulforapulum autotrophicum (strain ATCC 43914 / DSM 3382 / VKM B-1955 / HRM2) (Desulfobacterium autotrophicum), this protein is Flotillin-like protein FloA.